We begin with the raw amino-acid sequence, 302 residues long: Ribosome-binding factor PSRP1, chloroplastic (302 aa).

Residues 1–66 constitute a chloroplast transit peptide; sequence MATLCTSAIN…SRNKPNVVCM (66 aa).

In terms of assembly, binds to the mRNA channel of the chloroplast small ribosomal subunit and interacts with 16S sRNA nucleotides at the A-site and P-site.

Its subcellular location is the plastid. It is found in the chloroplast stroma. Its function is as follows. Ribosome-binding factor involved in light- and temperature-dependent control of protein synthesis. Interacts with 16S sRNA nucleotides at the A-site and P-site, where it protects the decoding center and inhibits translation by preventing tRNA binding. Stabilizes 70S ribosomes against dissociation. May be recycled by the combined action of ribosome-recycling factor (RRF) and EF-G. This is Ribosome-binding factor PSRP1, chloroplastic (PSRP1) from Spinacia oleracea (Spinach).